Consider the following 58-residue polypeptide: Large ribosomal subunit protein bL32 (58 aa).

Residues 1-24 are disordered; that stretch reads MAVPKKKTSKSKRDKRKATWKRKA.

It belongs to the bacterial ribosomal protein bL32 family.

The chain is Large ribosomal subunit protein bL32 from Synechococcus sp. (strain ATCC 27144 / PCC 6301 / SAUG 1402/1) (Anacystis nidulans).